The sequence spans 207 residues: NADH-quinone oxidoreductase subunit A (207 aa).

A run of 3 helical transmembrane segments spans residues 6–26 (WSAI…LVVP), 62–82 (LVAI…AYAV), and 87–107 (AGWL…IGLV).

The protein belongs to the complex I subunit 3 family. As to quaternary structure, NDH-1 is composed of 14 different subunits. Subunits NuoA, H, J, K, L, M, N constitute the membrane sector of the complex.

It is found in the cell inner membrane. It catalyses the reaction a quinone + NADH + 5 H(+)(in) = a quinol + NAD(+) + 4 H(+)(out). Functionally, NDH-1 shuttles electrons from NADH, via FMN and iron-sulfur (Fe-S) centers, to quinones in the respiratory chain. The immediate electron acceptor for the enzyme in this species is believed to be ubiquinone. Couples the redox reaction to proton translocation (for every two electrons transferred, four hydrogen ions are translocated across the cytoplasmic membrane), and thus conserves the redox energy in a proton gradient. This is NADH-quinone oxidoreductase subunit A from Psychrobacter arcticus (strain DSM 17307 / VKM B-2377 / 273-4).